A 278-amino-acid polypeptide reads, in one-letter code: MCPPQARAEVGSAMTEKTEMVCASSPAPAPPSKPASPGPLSTEEVDHRNTCTPWLPPGVPVINLGHTRPIGAAMPTTELSAFRPSLLQLTALGRAPPTLAVHYHPHPFLNSVYIGPAGPFSIFPNSRLKRRPSHSELDLADGHQPQKVARRVFTNSRERWRQQHVNGAFAELRKLLPTHPPDRKLSKNEVLRLAMKYIGFLVRLLRDQTAVLTSGPSAPGSRKPPARRGVEGSARFGAGHRVEAARSQPVLPGDCDGDPNGSVRPIKLEQTSLSPEVR.

The tract at residues 1–46 (MCPPQARAEVGSAMTEKTEMVCASSPAPAPPSKPASPGPLSTEEVD) is disordered. A compositionally biased stretch (pro residues) spans 27-37 (APAPPSKPASP). Residues 149–201 (ARRVFTNSRERWRQQHVNGAFAELRKLLPTHPPDRKLSKNEVLRLAMKYIGFL) form the bHLH domain. The interval 212 to 278 (LTSGPSAPGS…EQTSLSPEVR (67 aa)) is disordered. Polar residues predominate over residues 269–278 (EQTSLSPEVR). Serine 274 carries the post-translational modification Phosphoserine.

In terms of assembly, efficient DNA binding requires dimerization with another bHLH protein.

It localises to the nucleus. The protein is Protein lyl-1 (Lyl1) of Mus musculus (Mouse).